Here is a 404-residue protein sequence, read N- to C-terminus: Triose phosphate/phosphate translocator, chloroplastic (404 aa).

The N-terminal 74 residues, 1–74 (MESRVLSRTT…GPVCSRREKT (74 aa)), are a transit peptide targeting the chloroplast. Residues 75 to 98 (AVQPCRAASGSSGEAKTGFLEKYP) lie on the Chloroplast intermembrane side of the membrane. The helical transmembrane segment at 99-119 (ALVTGSFFFMWYFLNVIFNIL) threads the bilayer. Residues 120–131 (NKKIYNYFPYPY) lie on the Lumenal side of the membrane. Residues 132 to 152 (FVSVIHLFVGVVYCLASWSVG) form a helical membrane-spanning segment. Over 153–209 (LPKRAPMDSKLLKLLIPVAVCHAIGHVTSNVSFAAVAVSFTHTIKALEPFFNAAASQ) the chain is Chloroplast intermembrane. A helical membrane pass occupies residues 210–230 (FVLGQSIPITLWLSLAPVVIG). The Lumenal portion of the chain corresponds to 231–274 (VSMASLTELSFNWLGFISAMISNVSFTYRSLYSKKAMTDMDSTN). Residues 275 to 294 (IYAYISIIALFVCLPPAIIV) traverse the membrane as a helical segment. Topologically, residues 295–372 (EGPQLMKHGF…IAFGNKISTQ (78 aa)) are chloroplast intermembrane. Residues 373–393 (TAIGTSIAIAGVALYSLIKAK) traverse the membrane as a helical segment. Topologically, residues 394–404 (MEEEKRQMKST) are lumenal.

Belongs to the TPT transporter family. TPT (TC 2.A.7.9) subfamily. In terms of processing, the N-terminus is blocked.

The protein resides in the plastid. It localises to the chloroplast membrane. Functionally, mediates the export of fixed carbons from the chloroplasts into the cytosol in the form of triose phosphates. The protein is Triose phosphate/phosphate translocator, chloroplastic of Spinacia oleracea (Spinach).